Here is a 274-residue protein sequence, read N- to C-terminus: Large ribosomal subunit protein uL2cz/uL2cy (274 aa).

2 disordered regions span residues 1-33 (MAIH…LIYG) and 223-265 (MNPV…KYND).

Belongs to the universal ribosomal protein uL2 family. As to quaternary structure, part of the 50S ribosomal subunit.

The protein resides in the plastid. It is found in the chloroplast. The chain is Large ribosomal subunit protein uL2cz/uL2cy (rpl2-A) from Pelargonium hortorum (Common geranium).